Reading from the N-terminus, the 250-residue chain is tRNA (guanine-N(1)-)-methyltransferase (250 aa).

Residues glycine 115 and leucine 135–leucine 140 contribute to the S-adenosyl-L-methionine site.

The protein belongs to the RNA methyltransferase TrmD family. As to quaternary structure, homodimer.

Its subcellular location is the cytoplasm. It catalyses the reaction guanosine(37) in tRNA + S-adenosyl-L-methionine = N(1)-methylguanosine(37) in tRNA + S-adenosyl-L-homocysteine + H(+). Its function is as follows. Specifically methylates guanosine-37 in various tRNAs. This Legionella pneumophila (strain Paris) protein is tRNA (guanine-N(1)-)-methyltransferase.